A 343-amino-acid chain; its full sequence is Thioredoxin domain-containing protein 15 (343 aa).

Positions 1-20 are cleaved as a signal peptide; sequence MQLLCWWQILLWVLGLPARG. The Extracellular portion of the chain corresponds to 21–304; the sequence is LEEDSGHTWQ…GPLPSTLVKT (284 aa). Positions 86-95 are enriched in basic and acidic residues; that stretch reads EDQRSTEAHD. Residues 86-112 form a disordered region; sequence EDQRSTEAHDGTCSAQGDEDPRCGGRE. The Thioredoxin domain occupies 162 to 279; it reads ERNVTGLENF…LKIFIFNQTG (118 aa). Asn-170, Asn-177, Asn-189, and Asn-276 each carry an N-linked (GlcNAc...) asparagine glycan. The chain crosses the membrane as a helical span at residues 305–325; that stretch reads VDWLLVFSLFFLISFIMYATI. Residues 326 to 343 lie on the Cytoplasmic side of the membrane; sequence RTESIRWLIPGQEQEHAE.

Its subcellular location is the cell projection. It localises to the cilium membrane. Functionally, acts as a positive regulator of ciliary hedgehog signaling. Required for cilia biogenesis. The protein is Thioredoxin domain-containing protein 15 (Txndc15) of Rattus norvegicus (Rat).